We begin with the raw amino-acid sequence, 1204 residues long: Major DNA-binding protein (1204 aa).

The segment at 289–314 (SGTTTARGARRNDVNSTSKPSPSGGF) is disordered. A zinc finger spans residues 497-510 (CSLCEKHTRPVCAH). 2 consecutive short sequence motifs (required for filament formation) follow at residues 841 to 842 (FW) and 1146 to 1148 (FNF). Residues 1177–1204 (LKRPPEDDELFDLSGIPIKHGNITMEMI) are required for nuclear localization.

The protein belongs to the herpesviridae major DNA-binding protein family. In terms of assembly, homooligomers. Forms double-helical filaments necessary for the formation of replication compartments within the host nucleus. Interacts with the origin-binding protein. Interacts with the helicase primase complex; this interaction stimulates primer synthesis activity of the helicase-primase complex. Interacts with the DNA polymerase. Interacts with the alkaline exonuclease; this interaction increases its nuclease processivity.

The protein localises to the host nucleus. Plays several crucial roles in viral infection. Participates in the opening of the viral DNA origin to initiate replication by interacting with the origin-binding protein. May disrupt loops, hairpins and other secondary structures present on ssDNA to reduce and eliminate pausing of viral DNA polymerase at specific sites during elongation. Promotes viral DNA recombination by performing strand-transfer, characterized by the ability to transfer a DNA strand from a linear duplex to a complementary single-stranded DNA circle. Can also catalyze the renaturation of complementary single strands. Additionally, reorganizes the host cell nucleus, leading to the formation of prereplicative sites and replication compartments. This process is driven by the protein which can form double-helical filaments in the absence of DNA. This is Major DNA-binding protein from Homo sapiens (Human).